Reading from the N-terminus, the 110-residue chain is Coiled-coil-helix-coiled-coil-helix domain-containing protein 5 (110 aa).

Met-1 carries the N-acetylmethionine modification. CHCH domains are found at residues 9–52 and 55–97; these read ARYC…PIIR and RQAC…QPPR. 4 consecutive short sequence motifs (cx9C motif) follow at residues 12–22, 34–44, 58–68, and 79–89; these read CGRELEQYGQC, CHYLKMSIAQC, CAQPFEAFEEC, and CAEHMRRFLQC. Cystine bridges form between Cys-12–Cys-44, Cys-22–Cys-34, Cys-58–Cys-89, and Cys-68–Cys-79.

As to quaternary structure, monomer.

It localises to the mitochondrion intermembrane space. The protein is Coiled-coil-helix-coiled-coil-helix domain-containing protein 5 (CHCHD5) of Homo sapiens (Human).